A 386-amino-acid polypeptide reads, in one-letter code: Zinc finger CCCH domain-containing protein 2 (386 aa).

2 C3H1-type zinc fingers span residues His116 to Phe143 and Arg151 to Asp175. 2 disordered regions span residues Leu180–Asp200 and Ser220–Ser252. Over residues Ala182–Ser192 the composition is skewed to polar residues. Residues Ser220–Pro229 show a composition bias toward low complexity. Pro residues predominate over residues Pro230–Ser241.

It is found in the nucleus. Involved in leaf senescence delay. May repress jasmonic acid (JA) signaling role in promoting leaf senescence. May regulate panicle development and pollination/fertilization process. The chain is Zinc finger CCCH domain-containing protein 2 from Oryza sativa subsp. japonica (Rice).